Reading from the N-terminus, the 122-residue chain is Large ribosomal subunit protein uL14c (122 aa).

This sequence belongs to the universal ribosomal protein uL14 family. As to quaternary structure, part of the 50S ribosomal subunit.

It is found in the plastid. The protein localises to the chloroplast. Its function is as follows. Binds to 23S rRNA. In Platanus occidentalis (Sycamore), this protein is Large ribosomal subunit protein uL14c.